The primary structure comprises 147 residues: Plasminogen receptor (KT) (147 aa).

Residues 1 to 52 (MGFIFSKSMNENMKNQQEFMVTHARLQLERHLTMQNEMRERQMAMQIAWSRE) are Extracellular-facing. A helical transmembrane segment spans residues 53 to 73 (FLKYFGTFFGIATISLATGAL). Topologically, residues 74–78 (KRKKP) are cytoplasmic. Residues 79-99 (AFLVPIVPLSFIFTYQYDLGY) form a helical membrane-spanning segment. Over 100 to 147 (GTLLQRMKSEAEDILETEKTKLELPKGLITFESLEKARREQSKLFSDK) the chain is Extracellular.

As to quaternary structure, interacts with PLAT. Interacts with PLAUR. Expressed in monocytes; detected in differentiated monocytes but not in progenitor cells. Expressed in adrenal medulla and hippocampus.

The protein resides in the cell membrane. Functionally, receptor for plasminogen. Regulates urokinase plasminogen activator-dependent and stimulates tissue-type plasminogen activator-dependent cell surface plasminogen activation. Proposed to be part of a local catecholaminergic cell plasminogen activation system that regulates neuroendocrine prohormone processing. Involved in regulation of inflammatory response; regulates monocyte chemotactic migration and matrix metalloproteinase activation, such as of MMP2 and MMP9. The polypeptide is Plasminogen receptor (KT) (Plgrkt) (Mus musculus (Mouse)).